Here is a 111-residue protein sequence, read N- to C-terminus: BET1-like protein (111 aa).

Residues 1–86 (MADWARAQSP…MARSGQDNRK (86 aa)) are Cytoplasmic-facing. Serine 9 and serine 37 each carry phosphoserine. Residues 15–77 (EILDRENKRM…TGSVKRFSTM (63 aa)) enclose the t-SNARE coiled-coil homology domain. A helical; Anchor for type IV membrane protein transmembrane segment spans residues 87–107 (LLCGMAVGLIVAFFILSYFLS). The Lumenal portion of the chain corresponds to 108 to 111 (RART).

Component of a SNARE complex consisting of STX5, YKT6, GOSR1 and BET1L. Interacts with STX5.

It is found in the golgi apparatus membrane. It localises to the golgi apparatus. Its subcellular location is the trans-Golgi network membrane. Vesicle SNARE required for targeting and fusion of retrograde transport vesicles with the Golgi complex. Required for the integrity of the Golgi complex. This Homo sapiens (Human) protein is BET1-like protein.